The chain runs to 1064 residues: WD repeat-containing protein on Y chromosome (1064 aa).

8 WD repeats span residues 150–194 (EEVT…IRTA), 317–356 (RIPLGVSTFFVAESHNIVVTGGPDTFVRIWDVYIPTEPSA), 360–399 (GHNGGIVLVFVQPEENKVYSVDYQKIIKVWDLQEHTLLQT), 450–489 (THAAPVSVVLYNRLFRNIVTCGLDSYIIVWDPWTGRRKII), 502–541 (IIDIEITAACFDPLEQFLLTGARDGSLKIWNYNNAVVVRN), 589–629 (FHTD…RRYS), 742–781 (KTGDCVLTMCTDRKNRFLYTGTAFGYVKIWYIVNFCVPAS), and 825–864 (GHLKAINSIAFINLPKIVFTGSHDYSCRLWTQGGRYLGTL). The disordered stretch occupies residues 1022–1044 (SSLNIKQPTRRRSGKTHDPRNIR).

The protein is WD repeat-containing protein on Y chromosome of Drosophila ananassae (Fruit fly).